Reading from the N-terminus, the 85-residue chain is Antitoxin VapB43 (85 aa).

A disordered region spans residues 37–60; sequence GLNPPKPQAAGRYRVQPSGKGGLR.

Functionally, antitoxin component of a type II toxin-antitoxin (TA) system. The protein is Antitoxin VapB43 (vapB43) of Mycobacterium tuberculosis (strain CDC 1551 / Oshkosh).